A 156-amino-acid polypeptide reads, in one-letter code: MNINATLIGQAIWFALFVFFCMKFVWPPISRALDERKQKIAEGLSAADRAERDLELAQEKATANLKESKEKAAEIIDQANRRANQIVEEAKDAARAEGERLIAKAHSEIDQEVNQAREQLRKDVAVLALSGAEKVLGGEVNQDKHTQLLEQLAAEL.

The chain crosses the membrane as a helical span at residues 7-27; it reads LIGQAIWFALFVFFCMKFVWP.

The protein belongs to the ATPase B chain family. F-type ATPases have 2 components, F(1) - the catalytic core - and F(0) - the membrane proton channel. F(1) has five subunits: alpha(3), beta(3), gamma(1), delta(1), epsilon(1). F(0) has three main subunits: a(1), b(2) and c(10-14). The alpha and beta chains form an alternating ring which encloses part of the gamma chain. F(1) is attached to F(0) by a central stalk formed by the gamma and epsilon chains, while a peripheral stalk is formed by the delta and b chains.

The protein resides in the cell inner membrane. In terms of biological role, f(1)F(0) ATP synthase produces ATP from ADP in the presence of a proton or sodium gradient. F-type ATPases consist of two structural domains, F(1) containing the extramembraneous catalytic core and F(0) containing the membrane proton channel, linked together by a central stalk and a peripheral stalk. During catalysis, ATP synthesis in the catalytic domain of F(1) is coupled via a rotary mechanism of the central stalk subunits to proton translocation. Functionally, component of the F(0) channel, it forms part of the peripheral stalk, linking F(1) to F(0). This chain is ATP synthase subunit b, found in Alcanivorax borkumensis (strain ATCC 700651 / DSM 11573 / NCIMB 13689 / SK2).